A 251-amino-acid chain; its full sequence is ATP synthase subunit a (251 aa).

Transmembrane regions (helical) follow at residues 34 to 54 (VFLTSWFVIGVLVLASVAASS), 93 to 113 (FVGTLFLFIFVSNWSGALVPF), 130 to 150 (INTTVALALLTSLAYFYAGFS), 195 to 215 (LVVGVLVLLVPLFVPLPVMAL), and 216 to 236 (GLFTSAIQALIFATLAAAYIG).

Belongs to the ATPase A chain family. In terms of assembly, F-type ATPases have 2 components, CF(1) - the catalytic core - and CF(0) - the membrane proton channel. CF(1) has five subunits: alpha(3), beta(3), gamma(1), delta(1), epsilon(1). CF(0) has four main subunits: a, b, b' and c.

The protein localises to the cellular thylakoid membrane. Key component of the proton channel; it plays a direct role in the translocation of protons across the membrane. This chain is ATP synthase subunit a, found in Trichormus variabilis (strain ATCC 29413 / PCC 7937) (Anabaena variabilis).